We begin with the raw amino-acid sequence, 292 residues long: Acetylglutamate kinase (292 aa).

Substrate is bound by residues 64-65, Arg-86, and Asn-190; that span reads GG.

Belongs to the acetylglutamate kinase family. ArgB subfamily.

It is found in the cytoplasm. The catalysed reaction is N-acetyl-L-glutamate + ATP = N-acetyl-L-glutamyl 5-phosphate + ADP. Its pathway is amino-acid biosynthesis; L-arginine biosynthesis; N(2)-acetyl-L-ornithine from L-glutamate: step 2/4. In terms of biological role, catalyzes the ATP-dependent phosphorylation of N-acetyl-L-glutamate. This is Acetylglutamate kinase from Trichlorobacter lovleyi (strain ATCC BAA-1151 / DSM 17278 / SZ) (Geobacter lovleyi).